Reading from the N-terminus, the 346-residue chain is Fe(3+) ions import ATP-binding protein FbpC 3 (346 aa).

An ABC transporter domain is found at 5–235; the sequence is LEVDGVDKSF…PIDVATAEFI (231 aa). ATP is bound at residue 37-44; that stretch reads GPSGCGKT.

The protein belongs to the ABC transporter superfamily. Fe(3+) ion importer (TC 3.A.1.10) family. In terms of assembly, the complex is composed of two ATP-binding proteins (FbpC), two transmembrane proteins (FbpB) and a solute-binding protein (FbpA).

The protein localises to the cell membrane. It carries out the reaction Fe(3+)(out) + ATP + H2O = Fe(3+)(in) + ADP + phosphate + H(+). Part of the ABC transporter complex FbpABC involved in Fe(3+) ions import. Responsible for energy coupling to the transport system. This is Fe(3+) ions import ATP-binding protein FbpC 3 from Rhodococcus jostii (strain RHA1).